The sequence spans 1159 residues: Anillin-like protein 1 (1159 aa).

Disordered stretches follow at residues 43-81, 266-327, 409-430, 549-608, and 629-699; these read VASP…MKEN, QQVS…TKTT, KLKK…APVP, AIPK…GDVI, and FGFM…KSSS. Polar residues predominate over residues 50 to 60; that stretch reads FGSSSKCNDGP. Residues 287 to 327 are compositionally biased toward low complexity; it reads ASSATSSSSSTTTLTTISGASGSTTSGISNAPQDSASTKTT. A compositionally biased stretch (pro residues) spans 421–430; that stretch reads PPAPTSAPVP. Residues 564 to 584 are compositionally biased toward polar residues; it reads SASSLYSQGARSNTASPASKS. Acidic residues predominate over residues 660-684; it reads VIEEETENEDESEPYEPEEEEDDDA. One can recognise a PH domain in the interval 1029–1147; it reads DITYHGFLSM…WLSLINSTSK (119 aa).

As to expression, strongly expressed in dividing neuroblasts under the ventral epidermal cells during ventral enclosure.

Its subcellular location is the cytoplasm. It is found in the cell cortex. The protein localises to the cytoskeleton. It localises to the spindle. The protein resides in the midbody. Its subcellular location is the cleavage furrow. Its function is as follows. Required for contractile events in embryos that occur prior to mitosis, such as cortical ruffling and pseudocleavage. Promotes membrane ruffling by organizing cortical patches of septins and myosin II. Not generally required for cytokinesis in mitotic cells. Required for the asymmetric cleavage events that extrude the two polar bodies during oocyte meiosis. Not required for meiotic contractile ring assembly, initiation or closure but is required for the transformation of the contractile ring from a disk above the spindle to a tube around the spindle midzone. Promotes astral microtubule-directed cortical myosin polarization and cleavage furrow ingression. Regulates neuroblast cytokinesis during mid- to late-embryogenesis and is required for ventral enclosure. In Caenorhabditis elegans, this protein is Anillin-like protein 1 (ani-1).